Here is a 551-residue protein sequence, read N- to C-terminus: Cytochrome c lysine N-methyltransferase 1 (551 aa).

The SET domain maps to 46 to 273 (DKIELLRVSS…PNTEVLITYK (228 aa)). Positions 184 to 288 (IELLRQIYSA…LAMITKYGFD (105 aa)) are SET-like.

Belongs to the class V-like SAM-binding methyltransferase superfamily.

The protein localises to the cytoplasm. Its subcellular location is the cytosol. It catalyses the reaction L-lysyl-[cytochrome c] + S-adenosyl-L-methionine = N(6)-methyl-L-lysyl-[cytochrome c] + S-adenosyl-L-homocysteine + H(+). Functionally, methyltransferase which mediates trimethylation of cytochrome c (CYC1). This chain is Cytochrome c lysine N-methyltransferase 1 (CTM1), found in Candida glabrata (strain ATCC 2001 / BCRC 20586 / JCM 3761 / NBRC 0622 / NRRL Y-65 / CBS 138) (Yeast).